Consider the following 258-residue polypeptide: Regulatory protein RecX (258 aa).

It belongs to the RecX family.

The protein localises to the cytoplasm. Its function is as follows. Modulates RecA activity. This Streptococcus pyogenes serotype M5 (strain Manfredo) protein is Regulatory protein RecX.